The primary structure comprises 276 residues: Undecaprenyl-diphosphatase (276 aa).

8 consecutive transmembrane segments (helical) span residues 1–21 (MSWL…FLPV), 39–59 (AGAS…LIYF), 84–104 (YRLG…GLLF), 115–135 (LWLV…AEYY), 159–179 (LALM…LFLG), 188–208 (FGFL…LPDA), 222–242 (QLIV…AWFL), and 253–273 (FVGY…TGVL).

This sequence belongs to the UppP family.

It localises to the cell membrane. The catalysed reaction is di-trans,octa-cis-undecaprenyl diphosphate + H2O = di-trans,octa-cis-undecaprenyl phosphate + phosphate + H(+). Functionally, catalyzes the dephosphorylation of undecaprenyl diphosphate (UPP). Confers resistance to bacitracin. The sequence is that of Undecaprenyl-diphosphatase from Mycolicibacterium smegmatis (strain ATCC 700084 / mc(2)155) (Mycobacterium smegmatis).